We begin with the raw amino-acid sequence, 334 residues long: Protein FAM50B (334 aa).

Residue alanine 2 is modified to N-acetylalanine. The tract at residues 122–175 (FTLDEEEGDQEDSRQAESAEAHSAGAKKNLGKNPDVDTSFLPDREREEEENRLR) is disordered. 2 stretches are compositionally biased toward basic and acidic residues: residues 132 to 141 (EDSRQAESAE) and 163 to 175 (PDREREEEENRLR).

The protein belongs to the FAM50 family. As to expression, widely expressed. Abundant in testis, where it is expressed in seminiferous tubules, not in the interstitium. At the cellular level, expressed in primary spermatocytes and round spermatids, but not detectable in spermatogonia, elongating spermatids, mature spermatozoa, Sertoli cells or Leydig cells.

This Mus musculus (Mouse) protein is Protein FAM50B (Fam50b).